The sequence spans 154 residues: Myoglobin (154 aa).

The 147-residue stretch at 2 to 148 (GLSDGEWQLV…FRNDIAAKYK (147 aa)) folds into the Globin domain. Ser4 carries the post-translational modification Phosphoserine. His65 serves as a coordination point for nitrite. Residue His65 coordinates O2. The residue at position 68 (Thr68) is a Phosphothreonine. Position 94 (His94) interacts with heme b.

This sequence belongs to the globin family. As to quaternary structure, monomeric.

It is found in the cytoplasm. It localises to the sarcoplasm. It carries out the reaction Fe(III)-heme b-[protein] + nitric oxide + H2O = Fe(II)-heme b-[protein] + nitrite + 2 H(+). The enzyme catalyses H2O2 + AH2 = A + 2 H2O. Monomeric heme protein which primary function is to store oxygen and facilitate its diffusion within muscle tissues. Reversibly binds oxygen through a pentacoordinated heme iron and enables its timely and efficient release as needed during periods of heightened demand. Depending on the oxidative conditions of tissues and cells, and in addition to its ability to bind oxygen, it also has a nitrite reductase activity whereby it regulates the production of bioactive nitric oxide. Under stress conditions, like hypoxia and anoxia, it also protects cells against reactive oxygen species thanks to its pseudoperoxidase activity. The sequence is that of Myoglobin (MB) from Spalax ehrenbergi (Middle East blind mole rat).